Here is a 439-residue protein sequence, read N- to C-terminus: 3-phosphoshikimate 1-carboxyvinyltransferase (439 aa).

Positions 27, 28, and 32 each coordinate 3-phosphoshikimate. Lysine 27 contributes to the phosphoenolpyruvate binding site. Phosphoenolpyruvate-binding residues include glycine 101 and arginine 130. 3-phosphoshikimate contacts are provided by serine 175, glutamine 177, aspartate 326, and lysine 353. Residue glutamine 177 participates in phosphoenolpyruvate binding. The active-site Proton acceptor is the aspartate 326. Phosphoenolpyruvate is bound by residues arginine 357 and arginine 399.

It belongs to the EPSP synthase family. In terms of assembly, monomer.

Its subcellular location is the cytoplasm. The catalysed reaction is 3-phosphoshikimate + phosphoenolpyruvate = 5-O-(1-carboxyvinyl)-3-phosphoshikimate + phosphate. It participates in metabolic intermediate biosynthesis; chorismate biosynthesis; chorismate from D-erythrose 4-phosphate and phosphoenolpyruvate: step 6/7. Functionally, catalyzes the transfer of the enolpyruvyl moiety of phosphoenolpyruvate (PEP) to the 5-hydroxyl of shikimate-3-phosphate (S3P) to produce enolpyruvyl shikimate-3-phosphate and inorganic phosphate. This chain is 3-phosphoshikimate 1-carboxyvinyltransferase, found in Synechococcus sp. (strain CC9311).